Consider the following 82-residue polypeptide: Large ribosomal subunit protein uL23 (82 aa).

The protein belongs to the universal ribosomal protein uL23 family. As to quaternary structure, part of the 50S ribosomal subunit. Contacts protein L29.

In terms of biological role, binds to 23S rRNA. One of the proteins that surrounds the polypeptide exit tunnel on the outside of the ribosome. In Sulfurisphaera tokodaii (strain DSM 16993 / JCM 10545 / NBRC 100140 / 7) (Sulfolobus tokodaii), this protein is Large ribosomal subunit protein uL23.